The sequence spans 328 residues: Cytochrome c biogenesis protein CcsA (328 aa).

8 helical membrane-spanning segments follow: residues 15–35 (FLVL…PSIP), 36–56 (LLPG…AALL), 68–88 (ISNL…VHLI), 97–117 (LVGV…TLSL), 142–162 (VMML…AFLI), 236–256 (VIGL…VWAN), 263–283 (WSWD…AAYL), and 297–317 (AILA…VNLL).

This sequence belongs to the CcmF/CycK/Ccl1/NrfE/CcsA family. May interact with ccs1.

Its subcellular location is the cellular thylakoid membrane. Functionally, required during biogenesis of c-type cytochromes (cytochrome c6 and cytochrome f) at the step of heme attachment. This is Cytochrome c biogenesis protein CcsA from Microcystis aeruginosa (strain NIES-843 / IAM M-2473).